Reading from the N-terminus, the 505-residue chain is Glycerol kinase (505 aa).

Thr-14 lines the ADP pocket. ATP-binding residues include Thr-14, Thr-15, and Ser-16. Position 14 (Thr-14) interacts with sn-glycerol 3-phosphate. Position 18 (Arg-18) interacts with ADP. Sn-glycerol 3-phosphate-binding residues include Arg-84, Glu-85, Tyr-136, and Asp-246. Positions 84, 85, 136, 246, and 247 each coordinate glycerol. 2 residues coordinate ADP: Thr-268 and Gly-311. Positions 268, 311, 315, and 412 each coordinate ATP. Positions 412 and 416 each coordinate ADP.

Belongs to the FGGY kinase family.

It catalyses the reaction glycerol + ATP = sn-glycerol 3-phosphate + ADP + H(+). The protein operates within polyol metabolism; glycerol degradation via glycerol kinase pathway; sn-glycerol 3-phosphate from glycerol: step 1/1. Inhibited by fructose 1,6-bisphosphate (FBP). Key enzyme in the regulation of glycerol uptake and metabolism. Catalyzes the phosphorylation of glycerol to yield sn-glycerol 3-phosphate. This is Glycerol kinase from Vibrio campbellii (strain ATCC BAA-1116).